We begin with the raw amino-acid sequence, 604 residues long: Elongation factor 4 (604 aa).

A tr-type G domain is found at Lys8–Asn190. GTP contacts are provided by residues Asp20 to Thr25 and Asn137 to Asp140.

The protein belongs to the TRAFAC class translation factor GTPase superfamily. Classic translation factor GTPase family. LepA subfamily.

The protein localises to the cell inner membrane. The catalysed reaction is GTP + H2O = GDP + phosphate + H(+). In terms of biological role, required for accurate and efficient protein synthesis under certain stress conditions. May act as a fidelity factor of the translation reaction, by catalyzing a one-codon backward translocation of tRNAs on improperly translocated ribosomes. Back-translocation proceeds from a post-translocation (POST) complex to a pre-translocation (PRE) complex, thus giving elongation factor G a second chance to translocate the tRNAs correctly. Binds to ribosomes in a GTP-dependent manner. The chain is Elongation factor 4 from Fusobacterium nucleatum subsp. nucleatum (strain ATCC 25586 / DSM 15643 / BCRC 10681 / CIP 101130 / JCM 8532 / KCTC 2640 / LMG 13131 / VPI 4355).